A 64-amino-acid polypeptide reads, in one-letter code: Alpha-toxin Amm5 (64 aa).

The region spanning Lys-2–Asn-64 is the LCN-type CS-alpha/beta domain. Cystine bridges form between Cys-12/Cys-63, Cys-16/Cys-36, Cys-22/Cys-46, and Cys-26/Cys-48. Asn-64 is modified (asparagine amide).

As to expression, expressed by the venom gland.

The protein resides in the secreted. Alpha toxins bind voltage-independently at site-3 of sodium channels (Nav) and inhibit the inactivation of the activated channels, thereby blocking neuronal transmission. The polypeptide is Alpha-toxin Amm5 (Androctonus mauritanicus mauritanicus (Scorpion)).